A 205-amino-acid chain; its full sequence is Large ribosomal subunit protein uL3 (205 aa).

This sequence belongs to the universal ribosomal protein uL3 family. As to quaternary structure, part of the 50S ribosomal subunit. Forms a cluster with proteins L14 and L19.

One of the primary rRNA binding proteins, it binds directly near the 3'-end of the 23S rRNA, where it nucleates assembly of the 50S subunit. In Thermosipho melanesiensis (strain DSM 12029 / CIP 104789 / BI429), this protein is Large ribosomal subunit protein uL3.